The sequence spans 117 residues: Large ribosomal subunit protein bL17 (117 aa).

It belongs to the bacterial ribosomal protein bL17 family. Part of the 50S ribosomal subunit. Contacts protein L32.

The polypeptide is Large ribosomal subunit protein bL17 (Exiguobacterium sp. (strain ATCC BAA-1283 / AT1b)).